A 317-amino-acid chain; its full sequence is Tenomodulin (317 aa).

The Cytoplasmic portion of the chain corresponds to 1-30 (MAKNPPENCEGCHILNAEALKSKKICKSLK). A helical; Signal-anchor for type II membrane protein transmembrane segment spans residues 31–50 (ICGLVFGILALTLIVLFWGS). At 51-317 (KHFWPEVSKK…WWVARMLGRV (267 aa)) the chain is on the extracellular side. A BRICHOS domain is found at 93–186 (GNGTDETLEV…ICDNVTMYWI (94 aa)). N-linked (GlcNAc...) asparagine glycosylation occurs at N94. A disulfide bridge links C120 with C178. N180 is a glycosylation site (N-linked (GlcNAc...) asparagine). S239 bears the Phosphoserine mark.

The protein belongs to the chondromodulin-1 family. As to expression, widely expressed with highest expression in tendons and ligaments, in the diaphragm, eye and skeletal muscle. Expressed in neuronal cells of all brain regions. Very low expression, if any, in glial cells.

It localises to the membrane. Its subcellular location is the nucleus envelope. May be an angiogenesis inhibitor. This Mus musculus (Mouse) protein is Tenomodulin (Tnmd).